Here is a 219-residue protein sequence, read N- to C-terminus: Orotate phosphoribosyltransferase (219 aa).

Lys-26 is a 5-phospho-alpha-D-ribose 1-diphosphate binding site. 34 to 35 provides a ligand contact to orotate; sequence FF. Residues 72 to 73, Arg-102, Lys-103, Lys-106, His-108, and 128 to 136 each bind 5-phospho-alpha-D-ribose 1-diphosphate; these read YK and DDVITAGTA. Residues Thr-132 and Arg-160 each contribute to the orotate site.

The protein belongs to the purine/pyrimidine phosphoribosyltransferase family. PyrE subfamily. Homodimer.

The catalysed reaction is orotidine 5'-phosphate + diphosphate = orotate + 5-phospho-alpha-D-ribose 1-diphosphate. It functions in the pathway pyrimidine metabolism; UMP biosynthesis via de novo pathway; UMP from orotate: step 1/2. Functionally, catalyzes the transfer of a ribosyl phosphate group from 5-phosphoribose 1-diphosphate to orotate, leading to the formation of orotidine monophosphate (OMP). The polypeptide is Orotate phosphoribosyltransferase (URA5) (Yarrowia lipolytica (strain CLIB 122 / E 150) (Yeast)).